The sequence spans 240 residues: Allene oxide cyclase, chloroplastic (240 aa).

Residues 1–49 (MAAAAPSRVSVRAAAPGQTGGFAKIRPQVVVAAAARSAGVSGRRARSVR) constitute a chloroplast transit peptide.

This sequence belongs to the allene oxide cyclase family.

It is found in the plastid. The protein resides in the chloroplast. The catalysed reaction is (9Z,13S,15Z)-12,13-epoxyoctadeca-9,11,15-trienoate = (9S,13S,15Z)-12-oxophyto-10,15-dienoate. It participates in lipid metabolism; polyunsaturated fatty acid biosynthesis. Its function is as follows. Involved in the production of 12-oxo-phytodienoic acid (OPDA), a precursor of jasmonic acid (JA). Required for the production of JA in response to wounding. Necessary for flower and coleoptile development regulation by light, including blue (BL), red (RL) and far red (FR) lights. Involved in the auxin-mediated signaling pathway leading to growth stimulation. Essential for photodestruction of phyA upon activation by RL and FR. Implicated in responses to salt stress (NaCl). Functionally, confers resistance to incompatible strains of the blast fungus Magnaporthe grisea, jasmonic acid (JA) thus playing a significant role in the resistance to fungal infection. Implicated in riboflavin-induced resistance to the sheath blight Rhizoctonia solani. Required for Pseudomonas fluorescens-mediated JA-dependent induced systemic resistance (ISR). Confers some resistance, independently of the JA pathway but probably via OPDA accumulation, to brown planthopper (BPH, Nilaparvata lugens), a destructive, monophagous, piercing-sucking insect, mainly by reducing its feeding activity and survival rate. Triggers resistance to the chewing insect striped stem borer (SSB) Chilo suppressalis, to the root hemiparasite witchweed Striga hermonthica, and to the root feeder insect rice water weevil Lissorhoptrus oryzophilus, in a JA-dependent manner, by attenuating both the growth mass and growth rate of caterpillars. The polypeptide is Allene oxide cyclase, chloroplastic (Oryza sativa subsp. indica (Rice)).